Reading from the N-terminus, the 192-residue chain is Crossover junction endodeoxyribonuclease RuvC (192 aa).

Active-site residues include Asp20, Glu80, and Asp153. 3 residues coordinate Mg(2+): Asp20, Glu80, and Asp153.

This sequence belongs to the RuvC family. In terms of assembly, homodimer which binds Holliday junction (HJ) DNA. The HJ becomes 2-fold symmetrical on binding to RuvC with unstacked arms; it has a different conformation from HJ DNA in complex with RuvA. In the full resolvosome a probable DNA-RuvA(4)-RuvB(12)-RuvC(2) complex forms which resolves the HJ. Mg(2+) is required as a cofactor.

Its subcellular location is the cytoplasm. The enzyme catalyses Endonucleolytic cleavage at a junction such as a reciprocal single-stranded crossover between two homologous DNA duplexes (Holliday junction).. The RuvA-RuvB-RuvC complex processes Holliday junction (HJ) DNA during genetic recombination and DNA repair. Endonuclease that resolves HJ intermediates. Cleaves cruciform DNA by making single-stranded nicks across the HJ at symmetrical positions within the homologous arms, yielding a 5'-phosphate and a 3'-hydroxyl group; requires a central core of homology in the junction. The consensus cleavage sequence is 5'-(A/T)TT(C/G)-3'. Cleavage occurs on the 3'-side of the TT dinucleotide at the point of strand exchange. HJ branch migration catalyzed by RuvA-RuvB allows RuvC to scan DNA until it finds its consensus sequence, where it cleaves and resolves the cruciform DNA. The sequence is that of Crossover junction endodeoxyribonuclease RuvC from Christiangramia forsetii (strain DSM 17595 / CGMCC 1.15422 / KT0803) (Gramella forsetii).